Here is a 530-residue protein sequence, read N- to C-terminus: Autoinducer-2 kinase (530 aa).

Belongs to the FGGY kinase family.

The protein resides in the cytoplasm. The enzyme catalyses (S)-4,5-dihydroxypentane-2,3-dione + ATP = (2S)-2-hydroxy-3,4-dioxopentyl phosphate + ADP + H(+). Its function is as follows. Catalyzes the phosphorylation of autoinducer-2 (AI-2) to phospho-AI-2, which subsequently inactivates the transcriptional regulator LsrR and leads to the transcription of the lsr operon. Phosphorylates the ring-open form of (S)-4,5-dihydroxypentane-2,3-dione (DPD), which is the precursor to all AI-2 signaling molecules, at the C5 position. The sequence is that of Autoinducer-2 kinase from Salmonella choleraesuis (strain SC-B67).